The sequence spans 240 residues: Membrane-spanning 4-domains subfamily A member 7 (240 aa).

The Cytoplasmic segment spans residues 1–47 (MLLQSQTMGVSHSFTPKGITIPQREKPGHMYQNEDYLQNGLPTETTV). A helical membrane pass occupies residues 48-68 (LGTVQILCCLLISSLGAILVF). The Extracellular segment spans residues 69–83 (APYPSHFNPAISTTL). A helical transmembrane segment spans residues 84–104 (MSGYPFLGALCFGITGSLSII). At 105-121 (SGKQSTKPFDLSSLTSN) the chain is on the cytoplasmic side. Residues 122–142 (AVSSVTAGAGLFLLADSMVAL) form a helical membrane-spanning segment. The Extracellular segment spans residues 143–178 (RTASQHCGSEMDYLSSLPYSEYYYPIYEIKDCLLTS). Residues 179 to 199 (VSLTGVLVVMLIFTVLELLLA) form a helical membrane-spanning segment. Over 200 to 240 (AYSSVFWWKQLYSNNPGSSFSSTQSQDHIQQVKKSSSRSWI) the chain is Cytoplasmic. Residues 218–240 (SFSSTQSQDHIQQVKKSSSRSWI) are disordered.

It belongs to the MS4A family. Ubiquitous expression in normal tissues. Expression is more elevated in adult liver, lung, spleen, and heart than in their fetal counterparts, and is higher in normal tissues than in the cancerous tissue or cell lines. Low levels of expression were detected in the promonocytic stage, whereas high levels of expression were detected in mature monocytes.

The protein resides in the membrane. In terms of biological role, may be involved in signal transduction as a component of a multimeric receptor complex. This chain is Membrane-spanning 4-domains subfamily A member 7 (MS4A7), found in Homo sapiens (Human).